Here is a 78-residue protein sequence, read N- to C-terminus: Beta-defensin 29 (78 aa).

The first 23 residues, 1-23 (MPVTKSYFMTVVVVLILVDETTG), serve as a signal peptide directing secretion. Intrachain disulfides connect C40–C67, C47–C61, and C51–C68.

It belongs to the beta-defensin family. In terms of tissue distribution, highly expressed in the cauda epididymis.

Its subcellular location is the secreted. In terms of biological role, has antibacterial activity. The polypeptide is Beta-defensin 29 (Defb29) (Mus musculus (Mouse)).